We begin with the raw amino-acid sequence, 406 residues long: Vacuole membrane protein 1 (406 aa).

Residues 1-22 (MAENGTDCEQRRVGMPKEQNNG) form a disordered region. Topologically, residues 1 to 42 (MAENGTDCEQRRVGMPKEQNNGSFQDPSFMCNRKRRDREERQ) are cytoplasmic. The helical transmembrane segment at 43–63 (SIVLWRKPLITLQYFILEVLI) threads the bilayer. Topologically, residues 64–76 (NLKEWSVRLWHRR) are extracellular. The helical transmembrane segment at 77–97 (MMVVSVLLLLAVLSVAYYIEG) threads the bilayer. At 98-110 (EHQQCVQYIEKKC) the chain is on the cytoplasmic side. A helical transmembrane segment spans residues 111-131 (LWCAYWVGLGILSSVGLGTGL). Residues 132 to 250 (HTFLLYLGPH…ATRAKLTVQN (119 aa)) are Extracellular-facing. Residues 173–316 (GTEGAISLWT…FVIITFSKHI (144 aa)) form a VTT domain region. A helical membrane pass occupies residues 251–271 (LVQKVGFLGILACASIPNPLF). The Cytoplasmic segment spans residues 272 to 273 (DL). Residues 274-294 (AGITCGHFLVPFWTFFGATLI) traverse the membrane as a helical segment. Over 295 to 306 (GKAIIKMHIQKL) the chain is Extracellular. A helical transmembrane segment spans residues 307-327 (FVIITFSKHIVEQMVSLIGVI). The Cytoplasmic portion of the chain corresponds to 328-363 (PSIGPSLQKPFQEYLEAQRKKLHHKGDSGTPQSENW). The helical transmembrane segment at 364-384 (LSWAFEKLVIIMVFYFILSII) threads the bilayer. The Extracellular segment spans residues 385–406 (NSMAQSYAKRVQQKKLSVEKTK).

The protein belongs to the VMP1 family.

It is found in the endoplasmic reticulum-Golgi intermediate compartment membrane. Its subcellular location is the cell membrane. The protein resides in the vacuole membrane. The protein localises to the endoplasmic reticulum membrane. The enzyme catalyses a 1,2-diacyl-sn-glycero-3-phospho-L-serine(in) = a 1,2-diacyl-sn-glycero-3-phospho-L-serine(out). The catalysed reaction is cholesterol(in) = cholesterol(out). It catalyses the reaction a 1,2-diacyl-sn-glycero-3-phosphocholine(in) = a 1,2-diacyl-sn-glycero-3-phosphocholine(out). It carries out the reaction a 1,2-diacyl-sn-glycero-3-phosphoethanolamine(in) = a 1,2-diacyl-sn-glycero-3-phosphoethanolamine(out). Functionally, phospholipid scramblase involved in lipid homeostasis and membrane dynamics processes. Has phospholipid scramblase activity toward cholesterol and phosphatidylserine, as well as phosphatidylethanolamine and phosphatidylcholine. Required for autophagosome formation: participates in early stages of autophagosome biogenesis at the endoplasmic reticulum (ER) membrane by reequilibrating the leaflets of the ER as lipids are extracted by atg2 (atg2a or atg2b) to mediate autophagosome assembly. In addition to autophagy, involved in other processes in which phospholipid scramblase activity is required. Modulates ER contacts with lipid droplets, mitochondria and endosomes. The polypeptide is Vacuole membrane protein 1 (Xenopus laevis (African clawed frog)).